A 225-amino-acid polypeptide reads, in one-letter code: PKHD-type hydroxylase YbiX (225 aa).

The Fe2OG dioxygenase domain occupies 78–177; the sequence is TLSTPLFNRY…RVASFMWIQS (100 aa). Residues His96, Asp98, and His158 each contribute to the Fe cation site. Residue Arg168 coordinates 2-oxoglutarate.

The cofactor is Fe(2+). It depends on L-ascorbate as a cofactor.

The protein is PKHD-type hydroxylase YbiX of Escherichia coli O6:K15:H31 (strain 536 / UPEC).